Reading from the N-terminus, the 573-residue chain is Arginine--tRNA ligase (573 aa).

The 'HIGH' region signature appears at 122-132; sequence PNLAKEMHVGH.

Belongs to the class-I aminoacyl-tRNA synthetase family. As to quaternary structure, monomer.

The protein resides in the cytoplasm. It carries out the reaction tRNA(Arg) + L-arginine + ATP = L-arginyl-tRNA(Arg) + AMP + diphosphate. The polypeptide is Arginine--tRNA ligase (Laribacter hongkongensis (strain HLHK9)).